The sequence spans 214 residues: Ribosomal RNA small subunit methyltransferase G (214 aa).

S-adenosyl-L-methionine-binding positions include G73, L78, V124–E125, and R139.

Belongs to the methyltransferase superfamily. RNA methyltransferase RsmG family.

The protein localises to the cytoplasm. It carries out the reaction guanosine(527) in 16S rRNA + S-adenosyl-L-methionine = N(7)-methylguanosine(527) in 16S rRNA + S-adenosyl-L-homocysteine. Its function is as follows. Specifically methylates the N7 position of guanine in position 527 of 16S rRNA. The polypeptide is Ribosomal RNA small subunit methyltransferase G (Aeromonas hydrophila subsp. hydrophila (strain ATCC 7966 / DSM 30187 / BCRC 13018 / CCUG 14551 / JCM 1027 / KCTC 2358 / NCIMB 9240 / NCTC 8049)).